A 957-amino-acid polypeptide reads, in one-letter code: Glycine dehydrogenase (decarboxylating) (957 aa).

Lys-708 is subject to N6-(pyridoxal phosphate)lysine.

The protein belongs to the GcvP family. As to quaternary structure, the glycine cleavage system is composed of four proteins: P, T, L and H. It depends on pyridoxal 5'-phosphate as a cofactor.

It catalyses the reaction N(6)-[(R)-lipoyl]-L-lysyl-[glycine-cleavage complex H protein] + glycine + H(+) = N(6)-[(R)-S(8)-aminomethyldihydrolipoyl]-L-lysyl-[glycine-cleavage complex H protein] + CO2. Functionally, the glycine cleavage system catalyzes the degradation of glycine. The P protein binds the alpha-amino group of glycine through its pyridoxal phosphate cofactor; CO(2) is released and the remaining methylamine moiety is then transferred to the lipoamide cofactor of the H protein. This Salmonella typhimurium (strain LT2 / SGSC1412 / ATCC 700720) protein is Glycine dehydrogenase (decarboxylating).